Consider the following 354-residue polypeptide: NADH-quinone oxidoreductase subunit H (354 aa).

8 consecutive transmembrane segments (helical) span residues 25–45 (LVRI…LILW), 91–111 (WIYL…WAVI), 126–146 (LLYA…AGWA), 170–190 (MGFA…SGIV), 205–225 (FLSW…ISGI), 267–287 (IVIS…PFGF), 290–310 (FVPG…VFIW), and 330–350 (IFIP…MSPL).

It belongs to the complex I subunit 1 family. As to quaternary structure, NDH-1 is composed of 14 different subunits. Subunits NuoA, H, J, K, L, M, N constitute the membrane sector of the complex.

The protein resides in the cell inner membrane. It catalyses the reaction a quinone + NADH + 5 H(+)(in) = a quinol + NAD(+) + 4 H(+)(out). Functionally, NDH-1 shuttles electrons from NADH, via FMN and iron-sulfur (Fe-S) centers, to quinones in the respiratory chain. The immediate electron acceptor for the enzyme in this species is believed to be ubiquinone. Couples the redox reaction to proton translocation (for every two electrons transferred, four hydrogen ions are translocated across the cytoplasmic membrane), and thus conserves the redox energy in a proton gradient. This subunit may bind ubiquinone. In Paraburkholderia phytofirmans (strain DSM 17436 / LMG 22146 / PsJN) (Burkholderia phytofirmans), this protein is NADH-quinone oxidoreductase subunit H.